A 276-amino-acid polypeptide reads, in one-letter code: Odontogenic ameloblast-associated protein (276 aa).

A signal peptide spans 1 to 15 (MRTLILLGILGATMS). Thr101, Thr113, and Thr117 each carry an O-linked (GalNAc...) threonine glycan. The tract at residues 125–127 (MPS) is interaction with ARHGEF5. The O-linked (GalNAc...) serine glycan is linked to Ser246. O-linked (GalNAc...) threonine glycosylation is found at Thr247, Thr248, and Thr252. The O-linked (GalNAc...) serine glycan is linked to Ser253. O-linked (GalNAc...) threonine glycans are attached at residues Thr254, Thr258, Thr260, and Thr270. O-linked (GalNAc...) serine glycosylation occurs at Ser272.

Belongs to the ODAM family. As to quaternary structure, interacts (via C-terminus) with ARHGEF5. Post-translationally, O-glycosylated.

The protein localises to the secreted. It localises to the cytoplasm. Its subcellular location is the nucleus. Functionally, tooth-associated epithelia protein that probably plays a role in odontogenesis, the complex process that results in the initiation and generation of the tooth. May be incorporated in the enamel matrix at the end of mineralization process. Involved in the induction of RHOA activity via interaction with ARHGEF and expression of downstream factors such as ROCK. Plays a role in attachment of the junctional epithelium to the tooth surface. This is Odontogenic ameloblast-associated protein (ODAM) from Sus scrofa (Pig).